Reading from the N-terminus, the 595-residue chain is Aspartate--tRNA ligase (595 aa).

Position 176 (glutamate 176) interacts with L-aspartate. Residues glutamine 200–lysine 203 are aspartate. Residue arginine 222 participates in L-aspartate binding. ATP is bound by residues arginine 222–glutamate 224 and glutamine 231. Position 450 (histidine 450) interacts with L-aspartate. Glutamate 484 serves as a coordination point for ATP. Arginine 491 is a binding site for L-aspartate. Glycine 536 to arginine 539 serves as a coordination point for ATP.

This sequence belongs to the class-II aminoacyl-tRNA synthetase family. Type 1 subfamily. As to quaternary structure, homodimer.

The protein resides in the cytoplasm. The catalysed reaction is tRNA(Asp) + L-aspartate + ATP = L-aspartyl-tRNA(Asp) + AMP + diphosphate. Its function is as follows. Catalyzes the attachment of L-aspartate to tRNA(Asp) in a two-step reaction: L-aspartate is first activated by ATP to form Asp-AMP and then transferred to the acceptor end of tRNA(Asp). The sequence is that of Aspartate--tRNA ligase from Halalkalibacterium halodurans (strain ATCC BAA-125 / DSM 18197 / FERM 7344 / JCM 9153 / C-125) (Bacillus halodurans).